Here is a 260-residue protein sequence, read N- to C-terminus: MAEEEDYMSDSFINVQEDIRPGLPMLRQIREARRKEEKRQEANLKNRQKSIKEEEQERRDMGLKNALGCENKGFALLQKMGYKSGQALGKSGDGIVEPIPLNVKTGKSGIGHETLLKRKAEEKLESYRRKIHMKSQAEERAAEQFRIRLKNKQDEMKLEGDLRRSQRACQQLDTQKNIQVPREAWYWLRPEEETEEETEEEKEQDEDEYKSEDLSVLEKLQILTSYLREEHLYCIWCGTAYEDKEDLSSNCPGPTSADHD.

A coiled-coil region spans residues 25–61; sequence MLRQIREARRKEEKRQEANLKNRQKSIKEEEQERRDM. The interval 33-60 is disordered; that stretch reads RRKEEKRQEANLKNRQKSIKEEEQERRD. The 47-residue stretch at 69–115 folds into the G-patch domain; it reads CENKGFALLQKMGYKSGQALGKSGDGIVEPIPLNVKTGKSGIGHETL. Lys-123 carries the N6-acetyllysine modification. The segment at 187–212 is disordered; the sequence is WLRPEEETEEETEEEKEQDEDEYKSE. Positions 192 to 210 are enriched in acidic residues; that stretch reads EETEEETEEEKEQDEDEYK.

It belongs to the GPATCH11 family.

Its subcellular location is the chromosome. The protein localises to the centromere. It localises to the kinetochore. The chain is G patch domain-containing protein 11 (GPATCH11) from Bos taurus (Bovine).